The following is a 250-amino-acid chain: Bcl-2-like protein 12 (250 aa).

The interval 24 to 46 (GEAAGSPVPTPPRSPAQEEPTDF) is disordered. At S29 the chain carries Phosphoserine. T33 carries the phosphothreonine modification. S37 carries the post-translational modification Phosphoserine. R60 carries the post-translational modification Omega-N-methylarginine. A phosphoserine mark is found at S111, S158, S159, S161, and S189. The short motif at 227-238 (WIQAHGGWEGIL) is the BH2 element.

Belongs to the Bcl-2 family. Expressed mainly in breast, thymus, prostate, fetal liver, colon, placenta, pancreas, small intestine, spinal cord, kidney, and bone marrow and to a lesser extent in many other tissues. Isoform 2 is primarily expressed in skeletal muscle.

The protein is Bcl-2-like protein 12 of Homo sapiens (Human).